We begin with the raw amino-acid sequence, 810 residues long: Leucine--tRNA ligase (810 aa).

Positions 41 to 52 (PYPSGQGLHVGH) match the 'HIGH' region motif. A 'KMSKS' region motif is present at residues 582 to 586 (KMSKS). An ATP-binding site is contributed by Lys-585.

It belongs to the class-I aminoacyl-tRNA synthetase family.

The protein resides in the cytoplasm. The catalysed reaction is tRNA(Leu) + L-leucine + ATP = L-leucyl-tRNA(Leu) + AMP + diphosphate. The sequence is that of Leucine--tRNA ligase from Oenococcus oeni (strain ATCC BAA-331 / PSU-1).